Reading from the N-terminus, the 255-residue chain is NAP1-related protein 2 (255 aa).

A coiled-coil region spans residues 19 to 60 (IDAELVLSIEKLQEIQDDLEKINEKASDEVLEVEQKYNVIRK). The interval 213 to 255 (NPLTYFNNDADEEDFDGDDDGDEEEKEGDSDEDDDEEDEVGEE) is disordered. A compositionally biased stretch (acidic residues) spans 221-255 (DADEEDFDGDDDGDEEEKEGDSDEDDDEEDEVGEE).

Belongs to the nucleosome assembly protein (NAP) family. As to quaternary structure, can form homomeric and heteromeric protein complexes with NRP1. Binds histones H2A and H2B and associates with chromatin in vivo. In terms of tissue distribution, ubiquitous.

It is found in the cytoplasm. The protein localises to the nucleus. In terms of biological role, acts as a histone H2A/H2B chaperone in nucleosome assembly, playing a critical role for the correct expression of genes involved in root proliferation and patterning. Required with NRP1 for the maintenance of cell proliferation and differentiation in postembryonic root growth. Involved in both intramolecular and intermolecular somatic homologous recombination. In Arabidopsis thaliana (Mouse-ear cress), this protein is NAP1-related protein 2 (NRP2).